The sequence spans 652 residues: Complement component C1q receptor (652 aa).

A signal peptide spans 1–21 (MATSMGLLLLLLLLLTQPGAG). Over 24–580 (ADTEAVVCVG…QNNDGTDGQK (557 aa)) the chain is Extracellular. A C-type lectin domain is found at 32-174 (VGTACYTAHS…CGSPGSPGSN (143 aa)). 16 disulfide bridges follow: Cys-141–Cys-165, Cys-264–Cys-275, Cys-271–Cys-285, Cys-287–Cys-300, Cys-306–Cys-317, Cys-311–Cys-328, Cys-330–Cys-343, Cys-349–Cys-358, Cys-354–Cys-367, Cys-369–Cys-383, Cys-389–Cys-400, Cys-396–Cys-409, Cys-411–Cys-425, Cys-431–Cys-443, Cys-439–Cys-452, and Cys-454–Cys-467. EGF-like domains lie at 260-301 (PKYG…VTCA) and 302-344 (SRNP…LDCV). The N-linked (GlcNAc...) asparagine glycan is linked to Asn-325. In terms of domain architecture, EGF-like 3; calcium-binding spans 345-384 (DVDECQDSPCAQECVNTPGGFRCECWVGYEPGGPGEGACQ). The EGF-like 4; calcium-binding domain occupies 385-426 (DVDECALGRSPCAQGCTNTDGSFHCSCEEGYVLAGEDGTQCQ). In terms of domain architecture, EGF-like 5; calcium-binding spans 427 to 468 (DVDECVGPGGPLCDSLCFNTQGSFHCGCLPGWVLAPNGVSCT). 2 disordered regions span residues 472 to 546 (VSLG…VWRE) and 553 to 572 (TAAS…ATQN). Polar residues predominate over residues 512–526 (ATPTTSRPSLSSDAP). A helical membrane pass occupies residues 581-601 (LLLFYILGTVVAILLLLALAL). The Cytoplasmic segment spans residues 602-652 (GLLVYRKRRAKREEKKEKKPQNAADSYSWVPERAESRAMENQYSPTPGTDC). Positions 611–652 (AKREEKKEKKPQNAADSYSWVPERAESRAMENQYSPTPGTDC) are disordered. Over residues 612-621 (KREEKKEKKP) the composition is skewed to basic and acidic residues. Residue Ser-627 is modified to Phosphoserine. Phosphotyrosine occurs at positions 628 and 644. Polar residues predominate over residues 640-652 (MENQYSPTPGTDC).

In terms of assembly, homodimer. Interacts with C1QBP; the association may represent a cell surface C1q receptor. Interacts with surfactant protein A/SFTPA1. Interacts with multimerin-2/MMRN2. Interacts with DAG1; this interaction plays an important role in endothelial cell migration. Interacts with CBL. Interacts with IGFBP7. Interacts with VEGFR2. (Microbial infection) Interacts with hepatitis virus C/HCV core protein. Post-translationally, N- and O-glycosylated. In terms of processing, phosphorylated on Tyr-628 and Tyr-644 by SRC; these phosphorylations promote endothelial cell adhesion and migration. Highly expressed in endothelial cells, platelets, cells of myeloid origin, such as monocytes and neutrophils. Not expressed in cells of lymphoid origin.

The protein localises to the cell membrane. Functionally, cell surface receptor that plays a role in various physiological processes including inflammation, phagocytosis, and cell adhesion. Plays a role in phagocytosis and enhances the uptake of apoptotic cells and immune complexes by acting as a receptor for defense collagens including surfactant protein A/SFTPA1, C1q, and mannose-binding lectin (MBL2). Plays a role in the regulation of endothelial cell function and adhesion by activating angiogenesis. Mechanistically, exerts its angiogenic function by associating with beta-dystroglycan, leading to SRC-dependent phosphorylation and subsequent recruitment of CBL. In turn, CBL provides a docking site for downstream signaling components, such as CRKL to enhance cell migration. Participates in angiogenesis also by acting as a receptor for the ECM pan-endothelial glycoprotein multimerin-2/MMRN2 and IGFBP7 ligands. Both ligands play a non-redundant role in CD93-mediated endothelial cell function. Acts as a key regulator of endothelial barrier function through modulating VEGFR2 function. In Homo sapiens (Human), this protein is Complement component C1q receptor (CD93).